A 196-amino-acid chain; its full sequence is Small ribosomal subunit protein uS4c (196 aa).

The interval 15–41 (LGALPGLTSKRPRSGSDLKNPLRSGKR) is disordered. The S4 RNA-binding domain maps to 89–150 (MRLDNILFRL…KQRSKALIQN (62 aa)).

It belongs to the universal ribosomal protein uS4 family. In terms of assembly, part of the 30S ribosomal subunit. Contacts protein S5. The interaction surface between S4 and S5 is involved in control of translational fidelity.

It localises to the plastid. It is found in the chloroplast. In terms of biological role, one of the primary rRNA binding proteins, it binds directly to 16S rRNA where it nucleates assembly of the body of the 30S subunit. With S5 and S12 plays an important role in translational accuracy. This is Small ribosomal subunit protein uS4c (rps4) from Narcissus odorus (Campernelle jonquil).